A 299-amino-acid polypeptide reads, in one-letter code: CRISPR-associated endonuclease Cas1 3 (299 aa).

Mn(2+) contacts are provided by E143, H210, and D223.

The protein belongs to the CRISPR-associated endonuclease Cas1 family. Homodimer, forms a heterotetramer with a Cas2 homodimer. Requires Mg(2+) as cofactor. Mn(2+) serves as cofactor.

CRISPR (clustered regularly interspaced short palindromic repeat), is an adaptive immune system that provides protection against mobile genetic elements (viruses, transposable elements and conjugative plasmids). CRISPR clusters contain spacers, sequences complementary to antecedent mobile elements, and target invading nucleic acids. CRISPR clusters are transcribed and processed into CRISPR RNA (crRNA). Acts as a dsDNA endonuclease. Involved in the integration of spacer DNA into the CRISPR cassette. In Methanospirillum hungatei JF-1 (strain ATCC 27890 / DSM 864 / NBRC 100397 / JF-1), this protein is CRISPR-associated endonuclease Cas1 3.